The chain runs to 214 residues: ATP-dependent Clp protease proteolytic subunit 2 (214 aa).

S110 acts as the Nucleophile in catalysis. H135 is a catalytic residue.

This sequence belongs to the peptidase S14 family. As to quaternary structure, fourteen ClpP subunits assemble into 2 heptameric rings which stack back to back to give a disk-like structure with a central cavity, resembling the structure of eukaryotic proteasomes.

Its subcellular location is the cytoplasm. It carries out the reaction Hydrolysis of proteins to small peptides in the presence of ATP and magnesium. alpha-casein is the usual test substrate. In the absence of ATP, only oligopeptides shorter than five residues are hydrolyzed (such as succinyl-Leu-Tyr-|-NHMec, and Leu-Tyr-Leu-|-Tyr-Trp, in which cleavage of the -Tyr-|-Leu- and -Tyr-|-Trp bonds also occurs).. Its function is as follows. Cleaves peptides in various proteins in a process that requires ATP hydrolysis. Has a chymotrypsin-like activity. Plays a major role in the degradation of misfolded proteins. The protein is ATP-dependent Clp protease proteolytic subunit 2 of Mycobacterium leprae (strain TN).